The chain runs to 345 residues: Anthranilate phosphoribosyltransferase (345 aa).

5-phospho-alpha-D-ribose 1-diphosphate is bound by residues glycine 83, 86 to 87, threonine 91, 93 to 96, 111 to 119, and serine 123; these read GD, NIST, and KHGNRNLSS. Residue glycine 83 participates in anthranilate binding. Serine 95 lines the Mg(2+) pocket. Asparagine 114 provides a ligand contact to anthranilate. An anthranilate-binding site is contributed by arginine 169. Mg(2+)-binding residues include aspartate 228 and glutamate 229.

This sequence belongs to the anthranilate phosphoribosyltransferase family. As to quaternary structure, homodimer. It depends on Mg(2+) as a cofactor.

The enzyme catalyses N-(5-phospho-beta-D-ribosyl)anthranilate + diphosphate = 5-phospho-alpha-D-ribose 1-diphosphate + anthranilate. The protein operates within amino-acid biosynthesis; L-tryptophan biosynthesis; L-tryptophan from chorismate: step 2/5. In terms of biological role, catalyzes the transfer of the phosphoribosyl group of 5-phosphorylribose-1-pyrophosphate (PRPP) to anthranilate to yield N-(5'-phosphoribosyl)-anthranilate (PRA). This Paracoccus denitrificans (strain Pd 1222) protein is Anthranilate phosphoribosyltransferase.